A 336-amino-acid chain; its full sequence is Holliday junction branch migration complex subunit RuvB (336 aa).

The large ATPase domain (RuvB-L) stretch occupies residues 4–184 (SDRLISSQSI…FGIVQRLEYY (181 aa)). Residues Ile23, Arg24, Gly65, Lys68, Thr69, Thr70, 131–133 (EDY), Arg174, Tyr184, and Arg221 contribute to the ATP site. Thr69 contributes to the Mg(2+) binding site. The tract at residues 185–255 (SVDSLTQIVA…MAQQALEMLE (71 aa)) is small ATPAse domain (RuvB-S). The tract at residues 258–336 (QHGFDLMDRK…HFGFSAIEQE (79 aa)) is head domain (RuvB-H). Residues Arg313 and Arg318 each coordinate DNA.

The protein belongs to the RuvB family. Homohexamer. Forms an RuvA(8)-RuvB(12)-Holliday junction (HJ) complex. HJ DNA is sandwiched between 2 RuvA tetramers; dsDNA enters through RuvA and exits via RuvB. An RuvB hexamer assembles on each DNA strand where it exits the tetramer. Each RuvB hexamer is contacted by two RuvA subunits (via domain III) on 2 adjacent RuvB subunits; this complex drives branch migration. In the full resolvosome a probable DNA-RuvA(4)-RuvB(12)-RuvC(2) complex forms which resolves the HJ.

It localises to the cytoplasm. It catalyses the reaction ATP + H2O = ADP + phosphate + H(+). In terms of biological role, the RuvA-RuvB-RuvC complex processes Holliday junction (HJ) DNA during genetic recombination and DNA repair, while the RuvA-RuvB complex plays an important role in the rescue of blocked DNA replication forks via replication fork reversal (RFR). RuvA specifically binds to HJ cruciform DNA, conferring on it an open structure. The RuvB hexamer acts as an ATP-dependent pump, pulling dsDNA into and through the RuvAB complex. RuvB forms 2 homohexamers on either side of HJ DNA bound by 1 or 2 RuvA tetramers; 4 subunits per hexamer contact DNA at a time. Coordinated motions by a converter formed by DNA-disengaged RuvB subunits stimulates ATP hydrolysis and nucleotide exchange. Immobilization of the converter enables RuvB to convert the ATP-contained energy into a lever motion, pulling 2 nucleotides of DNA out of the RuvA tetramer per ATP hydrolyzed, thus driving DNA branch migration. The RuvB motors rotate together with the DNA substrate, which together with the progressing nucleotide cycle form the mechanistic basis for DNA recombination by continuous HJ branch migration. Branch migration allows RuvC to scan DNA until it finds its consensus sequence, where it cleaves and resolves cruciform DNA. The protein is Holliday junction branch migration complex subunit RuvB of Legionella pneumophila subsp. pneumophila (strain Philadelphia 1 / ATCC 33152 / DSM 7513).